Reading from the N-terminus, the 225-residue chain is Endonuclease V (225 aa).

Positions 43 and 110 each coordinate Mg(2+).

It belongs to the endonuclease V family. Requires Mg(2+) as cofactor.

The protein localises to the cytoplasm. It carries out the reaction Endonucleolytic cleavage at apurinic or apyrimidinic sites to products with a 5'-phosphate.. DNA repair enzyme involved in the repair of deaminated bases. Selectively cleaves double-stranded DNA at the second phosphodiester bond 3' to a deoxyinosine leaving behind the intact lesion on the nicked DNA. The protein is Endonuclease V of Thermotoga sp. (strain RQ2).